Consider the following 388-residue polypeptide: Chorismate synthase (388 aa).

Residues arginine 39 and arginine 45 each contribute to the NADP(+) site. Residues 95-118 form a disordered region; that stretch reads EKNEKSRRVSRPRPGHADLVGGMK. FMN is bound by residues 130–132, 251–252, glycine 296, 311–315, and arginine 337; these read RSS, NA, and KPIPT.

Belongs to the chorismate synthase family. Homotetramer. The cofactor is FMNH2.

The enzyme catalyses 5-O-(1-carboxyvinyl)-3-phosphoshikimate = chorismate + phosphate. It functions in the pathway metabolic intermediate biosynthesis; chorismate biosynthesis; chorismate from D-erythrose 4-phosphate and phosphoenolpyruvate: step 7/7. Its function is as follows. Catalyzes the anti-1,4-elimination of the C-3 phosphate and the C-6 proR hydrogen from 5-enolpyruvylshikimate-3-phosphate (EPSP) to yield chorismate, which is the branch point compound that serves as the starting substrate for the three terminal pathways of aromatic amino acid biosynthesis. This reaction introduces a second double bond into the aromatic ring system. This is Chorismate synthase from Listeria innocua serovar 6a (strain ATCC BAA-680 / CLIP 11262).